Reading from the N-terminus, the 318-residue chain is Transaldolase (318 aa).

K126 acts as the Schiff-base intermediate with substrate in catalysis.

It belongs to the transaldolase family. Type 1 subfamily. Homodimer.

The protein localises to the cytoplasm. The enzyme catalyses D-sedoheptulose 7-phosphate + D-glyceraldehyde 3-phosphate = D-erythrose 4-phosphate + beta-D-fructose 6-phosphate. Its pathway is carbohydrate degradation; pentose phosphate pathway; D-glyceraldehyde 3-phosphate and beta-D-fructose 6-phosphate from D-ribose 5-phosphate and D-xylulose 5-phosphate (non-oxidative stage): step 2/3. Transaldolase is important for the balance of metabolites in the pentose-phosphate pathway. The protein is Transaldolase of Cupriavidus metallidurans (strain ATCC 43123 / DSM 2839 / NBRC 102507 / CH34) (Ralstonia metallidurans).